Here is a 280-residue protein sequence, read N- to C-terminus: UPF0758 protein Atu1607 (280 aa).

The tract at residues 1 to 22 is disordered; the sequence is MAKRPALPSADLSPTSGFEAGE. Residues 158-280 form the MPN domain; that stretch reads VLGSWSSVID…HASFKGLRLI (123 aa). Residues His229, His231, and Asp242 each contribute to the Zn(2+) site. Residues 229–242 carry the JAMM motif motif; it reads HNHPSGDPTPSRAD.

It belongs to the UPF0758 family.

The sequence is that of UPF0758 protein Atu1607 from Agrobacterium fabrum (strain C58 / ATCC 33970) (Agrobacterium tumefaciens (strain C58)).